Reading from the N-terminus, the 137-residue chain is Small ribosomal subunit protein uS12 (137 aa).

The interval 1–55 is disordered; sequence MPTINQLVRKPRQSKIKKSDSPALNKGFNSKKKKFTDLNSPQKRGVCTRVGTMTP. A 3-methylthioaspartic acid modification is found at Asp102. Residues 118 to 137 form a disordered region; that stretch reads SGVDGRRQGRSLYGTKKPKN.

It belongs to the universal ribosomal protein uS12 family. As to quaternary structure, part of the 30S ribosomal subunit. Contacts proteins S8 and S17. May interact with IF1 in the 30S initiation complex.

Its function is as follows. With S4 and S5 plays an important role in translational accuracy. Functionally, interacts with and stabilizes bases of the 16S rRNA that are involved in tRNA selection in the A site and with the mRNA backbone. Located at the interface of the 30S and 50S subunits, it traverses the body of the 30S subunit contacting proteins on the other side and probably holding the rRNA structure together. The combined cluster of proteins S8, S12 and S17 appears to hold together the shoulder and platform of the 30S subunit. This Staphylococcus aureus (strain Mu3 / ATCC 700698) protein is Small ribosomal subunit protein uS12.